The primary structure comprises 269 residues: CCAAT/enhancer-binding protein delta (269 aa).

Disordered regions lie at residues Met-1–Ala-48, Pro-97–Ser-133, and Ala-151–Met-219. Ser-2 is modified (N-acetylserine). Composition is skewed to low complexity over residues Gly-36–Ala-48 and Pro-97–Arg-107. A Glycyl lysine isopeptide (Lys-Gly) (interchain with G-Cter in SUMO) cross-link involves residue Lys-120. Positions Pro-155–Gly-175 are enriched in pro residues. Over residues Ala-177–Asn-201 the composition is skewed to basic and acidic residues. The region spanning Ser-191–Leu-254 is the bZIP domain. Residues Arg-195 to Lys-222 are basic motif. A leucine-zipper region spans residues Leu-226–Leu-254.

Belongs to the bZIP family. C/EBP subfamily. Binds DNA as a homodimer and as a heterodimer. Can form stable heterodimers with CEBPB. Can form stable heterodimers with CEBPA and CEBPE. Directly interacts with SPI1/PU.1; this interaction does not affect DNA-binding properties of each partner. Interacts with PRDM16.

It is found in the nucleus. Its function is as follows. Transcription activator that recognizes two different DNA motifs: the CCAAT homology common to many promoters and the enhanced core homology common to many enhancers. Important transcription factor regulating the expression of genes involved in immune and inflammatory responses. Transcriptional activator that enhances IL6 transcription alone and as heterodimer with CEBPB. This chain is CCAAT/enhancer-binding protein delta (CEBPD), found in Homo sapiens (Human).